The chain runs to 153 residues: Ribonuclease HI (153 aa).

The RNase H type-1 domain maps to 1 to 141; sequence MKSVNIFTDG…CDELAKLGAN (141 aa). Residues aspartate 9, glutamate 47, aspartate 69, and aspartate 133 each contribute to the Mg(2+) site.

The protein belongs to the RNase H family. As to quaternary structure, monomer. Mg(2+) serves as cofactor.

Its subcellular location is the cytoplasm. The enzyme catalyses Endonucleolytic cleavage to 5'-phosphomonoester.. In terms of biological role, endonuclease that specifically degrades the RNA of RNA-DNA hybrids. The polypeptide is Ribonuclease HI (Haemophilus ducreyi (strain 35000HP / ATCC 700724)).